The following is a 397-amino-acid chain: Small ribosomal subunit protein mS29 (397 aa).

A mitochondrion-targeting transit peptide spans 1–17 (MLKGMTRLVSRVHKLDP). Residues K174 and K206 each carry the N6-acetyllysine modification.

It belongs to the mitochondrion-specific ribosomal protein mS29 family. Component of the mitochondrial ribosome small subunit (28S) which comprises a 12S rRNA and about 30 distinct proteins. Interacts with DELE1. Interacts with NOA1.

It localises to the mitochondrion. It catalyses the reaction GTP + H2O = GDP + phosphate + H(+). In terms of biological role, as a component of the mitochondrial small ribosomal subunit, it plays a role in the translation of mitochondrial mRNAs. Involved in mediating interferon-gamma-induced cell death. Displays GTPase activity in vitro. This Bos taurus (Bovine) protein is Small ribosomal subunit protein mS29.